The chain runs to 265 residues: GTP cyclohydrolase FolE2 (265 aa).

The protein belongs to the GTP cyclohydrolase IV family.

It catalyses the reaction GTP + H2O = 7,8-dihydroneopterin 3'-triphosphate + formate + H(+). Its pathway is cofactor biosynthesis; 7,8-dihydroneopterin triphosphate biosynthesis; 7,8-dihydroneopterin triphosphate from GTP: step 1/1. Its function is as follows. Converts GTP to 7,8-dihydroneopterin triphosphate. This Bordetella petrii (strain ATCC BAA-461 / DSM 12804 / CCUG 43448) protein is GTP cyclohydrolase FolE2.